The sequence spans 172 residues: Bone marrow stromal antigen 2 (172 aa).

Topologically, residues Met1–Arg26 are cytoplasmic. Lys20 is covalently cross-linked (Glycyl lysine isopeptide (Lys-Gly) (interchain with G-Cter in ubiquitin)). Residues Trp27 to Val47 traverse the membrane as a helical; Signal-anchor for type II membrane protein segment. The Extracellular segment spans residues Tyr48–Ser152. N-linked (GlcNAc...) asparagine glycans are attached at residues Asn70 and Asn97. Residues Leu103–Gln149 are a coiled coil. A lipid anchor (GPI-anchor amidated serine) is attached at Ser152. Positions Gly153–Phe172 are cleaved as a propeptide — removed in mature form.

Parallel homodimer; disulfide-linked. May form homotetramers under reducing conditions. Isoform 1 and isoform 2 form homodimers and also heterodimers with each other. Dimerization is essential for its antiviral activity. Interacts (via cytoplasmic domain) with ARHGAP44. Interacts with MMP14 (via C-terminal cytoplasmic tail). Interacts with LILRA4/ILT7. Interacts with RNF115. Post-translationally, N-glycosylated. The GPI anchor is essential for its antiviral activity. In terms of tissue distribution, ubiquitously expressed, with highest levels in brain and liver. Present in liver (at protein level).

Its subcellular location is the golgi apparatus. It is found in the trans-Golgi network. The protein resides in the cell membrane. The protein localises to the late endosome. It localises to the membrane raft. Its subcellular location is the cytoplasm. It is found in the apical cell membrane. In terms of biological role, IFN-induced antiviral host restriction factor which efficiently blocks the release of diverse mammalian enveloped viruses by directly tethering nascent virions to the membranes of infected cells. Acts as a direct physical tether, holding virions to the cell membrane and linking virions to each other. The tethered virions can be internalized by endocytosis and subsequently degraded or they can remain on the cell surface. In either case, their spread as cell-free virions is restricted. Its target viruses belong to diverse families, including retroviridae: human immunodeficiency virus type 1 (HIV-1), mouse mammary tumor virus (MMTV) and murine leukemia virus (MLV), filoviridae: ebola virus (EBOV), arenaviridae: lassa virus (LASV), and rhabdoviridae: vesicular stomatitis virus (VSV). Can inhibit cell surface proteolytic activity of MMP14 causing decreased activation of MMP15 which results in inhibition of cell growth and migration. Can stimulate signaling by LILRA4/ILT7 and consequently provide negative feedback to the production of IFN by plasmacytoid dendritic cells in response to viral infection. Plays a role in the organization of the subapical actin cytoskeleton in polarized epithelial cells. The chain is Bone marrow stromal antigen 2 (Bst2) from Rattus norvegicus (Rat).